The chain runs to 249 residues: Phosphoserine phosphatase (249 aa).

It belongs to the HAD-like hydrolase superfamily. In terms of assembly, homodimer. It depends on Mg(2+) as a cofactor. Co(2+) is required as a cofactor.

The catalysed reaction is O-phospho-L-serine + H2O = L-serine + phosphate. It carries out the reaction O-phospho-D-serine + H2O = D-serine + phosphate. Its pathway is amino-acid biosynthesis; L-serine biosynthesis; L-serine from 3-phospho-D-glycerate: step 3/3. In terms of biological role, catalyzes the last step of the phosphorylated serine biosynthetic pathway, i.e. dephosphorylation of O-phospho-L-serine to form L-serine. Is also able to dephosphorylate O-phospho-D-serine with similar efficiency. Displays a poor activity on L-phosphothreonine, and cannot use L-phosphotyrosine, pyridoxal phosphate, glucose 6-phosphate, or fructose 6-phosphate as substrates. The protein is Phosphoserine phosphatase of Thermus thermophilus (strain ATCC BAA-163 / DSM 7039 / HB27).